The chain runs to 210 residues: Ribosomal RNA small subunit methyltransferase G (210 aa).

S-adenosyl-L-methionine-binding positions include Leu78, Ile124–Glu125, and Arg138.

Belongs to the methyltransferase superfamily. RNA methyltransferase RsmG family.

The protein localises to the cytoplasm. The enzyme catalyses guanosine(527) in 16S rRNA + S-adenosyl-L-methionine = N(7)-methylguanosine(527) in 16S rRNA + S-adenosyl-L-homocysteine. Its function is as follows. Specifically methylates the N7 position of guanine in position 527 of 16S rRNA. This chain is Ribosomal RNA small subunit methyltransferase G, found in Bordetella bronchiseptica (strain ATCC BAA-588 / NCTC 13252 / RB50) (Alcaligenes bronchisepticus).